A 334-amino-acid chain; its full sequence is Cytoskeleton protein RodZ (334 aa).

Residues 1-111 (MNTEATHDQN…LGKRRKKRDG (111 aa)) lie on the Cytoplasmic side of the membrane. Positions 19–71 (LRNAREQLGLSQQAVAERLCLKVSTVRDIEEDKAPSDLASTFLRGYIRSYARL) constitute an HTH cro/C1-type domain. Residues 30 to 49 (QQAVAERLCLKVSTVRDIEE) constitute a DNA-binding region (H-T-H motif). The helical; Signal-anchor for type II membrane protein transmembrane segment at 112 to 132 (WLMSFTWLVLFVVVGLTGAWW) threads the bilayer. Residues 133-334 (WQNHKAQQEE…TLNAEPTPAQ (202 aa)) lie on the Periplasmic side of the membrane. The tract at residues 155–241 (NADKDSGQSV…PSALPTSQAG (87 aa)) is disordered. A compositionally biased stretch (polar residues) spans 161–175 (GQSVPLDTGAVTSQD). Low complexity-rich tracts occupy residues 176–211 (TTPAQTAPAPATPVDSTAATQTPAPTAAATQNTVVA) and 219–241 (TAATSAAPAATETPSALPTSQAG).

The protein belongs to the RodZ family.

The protein resides in the cell inner membrane. Cytoskeletal protein that is involved in cell-shape control through regulation of the length of the long axis. This Salmonella dublin (strain CT_02021853) protein is Cytoskeleton protein RodZ.